Reading from the N-terminus, the 203-residue chain is Glutathione S-transferase 2 (203 aa).

The 78-residue stretch at 1–78 folds into the GST N-terminal domain; that stretch reads MPKVVFHYFG…YLGRKYGLAG (78 aa). Glutathione is bound by residues Tyr8, Trp38, Lys42, 48–50, and 62–63; these read GQM and QS. Residues 80 to 203 enclose the GST C-terminal domain; sequence DIEEDFEIDQ…YLDSAPKKEF (124 aa).

Belongs to the GST superfamily. Sigma family. In terms of assembly, homodimer.

The catalysed reaction is RX + glutathione = an S-substituted glutathione + a halide anion + H(+). In terms of biological role, conjugation of reduced glutathione to a wide number of exogenous and endogenous hydrophobic electrophiles. This is Glutathione S-transferase 2 (GST2) from Manduca sexta (Tobacco hawkmoth).